Consider the following 272-residue polypeptide: Bis(5'-nucleosyl)-tetraphosphatase, symmetrical (272 aa).

It belongs to the Ap4A hydrolase family.

It catalyses the reaction P(1),P(4)-bis(5'-adenosyl) tetraphosphate + H2O = 2 ADP + 2 H(+). In terms of biological role, hydrolyzes diadenosine 5',5'''-P1,P4-tetraphosphate to yield ADP. This is Bis(5'-nucleosyl)-tetraphosphatase, symmetrical from Chromohalobacter salexigens (strain ATCC BAA-138 / DSM 3043 / CIP 106854 / NCIMB 13768 / 1H11).